Consider the following 215-residue polypeptide: 3-demethoxyubiquinol 3-hydroxylase (215 aa).

The Fe cation site is built by Glu-64, Glu-94, His-97, Glu-146, Glu-178, and His-181.

The protein belongs to the COQ7 family. Fe cation is required as a cofactor.

It localises to the cell membrane. The catalysed reaction is a 5-methoxy-2-methyl-3-(all-trans-polyprenyl)benzene-1,4-diol + AH2 + O2 = a 3-demethylubiquinol + A + H2O. The protein operates within cofactor biosynthesis; ubiquinone biosynthesis. Functionally, catalyzes the hydroxylation of 2-nonaprenyl-3-methyl-6-methoxy-1,4-benzoquinol during ubiquinone biosynthesis. In Pseudomonas aeruginosa (strain LESB58), this protein is 3-demethoxyubiquinol 3-hydroxylase.